A 591-amino-acid polypeptide reads, in one-letter code: MLSNKRISLIKVLPIPSNKKNVFKINCSSNTTIITTSSTTTTSGIKSYSTHNRSNNDTHTSKSNTIDQHQQQQPQQHQNNDNKHLFTPTPFQSLVKNVNKPFRNDKDPDYLPTHHSVLNMSLDQLIEMYKNRKVVDLSHVPTLDPQDVFINSELKLEEIDVFGFDYDYTLANYGDQVQHLIYDLAMSHLVDEQKYPMALKEIKYDPTFAIRGLHFDVNHGLLMKLDYLNNIQAGAIYHGRRPLTKEEVIQIYGSMQLKRLYCDSFLKPMSDIFCLPEACLIANTIQYLTDHNLAFEPRIIHEDVTAAVGKVHLGGGLHNKIISDFPLYLNKHPLLGEFLLKLKSHGKKLFLLTNNSYFYANHGMKYLLNDQLNGKYEDWTDVFDVIITKCDKPSFFGKGRPFRMYHPDSDRYDWNEVNHFEPKKVYVGGSLKQFTNVSKWRGRSVMYFGDHLYSDLVEPSQKEGWKTGVIIKELEVEVGIQNSPKYREQLAELLQLEDVIRKCQFFSGEKKELFLEQLKTERYKKRLALKEPFNANFGSLFRTHTNATIFASSLQRHADIYTSKIENLISYPLTASLIPSRNYLPHEFKLN.

Low complexity-rich tracts occupy residues 38 to 50 and 68 to 78; these read STTT…SYST and QHQQQQPQQHQ. The disordered stretch occupies residues 38 to 88; the sequence is STTTTSGIKSYSTHNRSNNDTHTSKSNTIDQHQQQQPQQHQNNDNKHLFTP. Catalysis depends on D165, which acts as the Nucleophile. Residues D165 and D167 each contribute to the Mg(2+) site. The active-site Proton donor is the D167. A substrate-binding site is contributed by 305–313; that stretch reads TAAVGKVHL. D450 lines the Mg(2+) pocket.

This sequence belongs to the 5'(3')-deoxyribonucleotidase family. Mg(2+) is required as a cofactor.

The sequence is that of 5'-nucleotidase domain-containing protein DDB_G0275467 from Dictyostelium discoideum (Social amoeba).